The chain runs to 183 residues: uncharacterized protein (183 aa).

Residues 1-182 enclose the Macro domain; that stretch reads MIKVVKGDIT…KALKIVGQGG (182 aa).

This is an uncharacterized protein from Pyrococcus furiosus (strain ATCC 43587 / DSM 3638 / JCM 8422 / Vc1).